Here is a 429-residue protein sequence, read N- to C-terminus: Phosphoribosylamine--glycine ligase (429 aa).

The region spanning lysine 108 to alanine 315 is the ATP-grasp domain. Position 134–195 (leucine 134–serine 195) interacts with ATP. Positions 285 and 287 each coordinate Mg(2+).

It belongs to the GARS family. Mg(2+) serves as cofactor. Requires Mn(2+) as cofactor.

It carries out the reaction 5-phospho-beta-D-ribosylamine + glycine + ATP = N(1)-(5-phospho-beta-D-ribosyl)glycinamide + ADP + phosphate + H(+). The protein operates within purine metabolism; IMP biosynthesis via de novo pathway; N(1)-(5-phospho-D-ribosyl)glycinamide from 5-phospho-alpha-D-ribose 1-diphosphate: step 2/2. The chain is Phosphoribosylamine--glycine ligase from Pseudomonas aeruginosa (strain ATCC 15692 / DSM 22644 / CIP 104116 / JCM 14847 / LMG 12228 / 1C / PRS 101 / PAO1).